We begin with the raw amino-acid sequence, 103 residues long: Thioredoxin-1 (103 aa).

A Thioredoxin domain is found at 2–103 (VTQFKTASEF…AIKQAIAANA (102 aa)). Catalysis depends on nucleophile residues cysteine 30 and cysteine 33. A disulfide bond links cysteine 30 and cysteine 33. Glycyl lysine isopeptide (Lys-Gly) (interchain with G-Cter in ubiquitin) cross-links involve residues lysine 54, lysine 66, and lysine 96.

Belongs to the thioredoxin family. Monomer. Part of the heterodimeric LMA1 complex together with the proteinase inhibitor PBI2. Most of the thioredoxin of yeast is in this complex rather than the well-studied monomer. LMA1 binds to the ATPase SEC18. Post-translationally, reversible disulfide bond formation between Cys-30 and Cys-33, reverted by thioredoxin reductase TRR1 using NADPH as hydrogen donor.

The protein localises to the nucleus. It localises to the cytoplasm. It is found in the golgi apparatus membrane. The protein resides in the mitochondrion intermembrane space. Participates as a hydrogen donor in redox reactions through the reversible oxidation of its active center dithiol to a disulfide, accompanied by the transfer of 2 electrons and 2 protons. It is involved in many cellular processes, including deoxyribonucleotide synthesis, repair of oxidatively damaged proteins, protein folding, sulfur metabolism, and redox homeostasis. Thioredoxin-dependent enzymes include phosphoadenosine-phosphosulfate reductase MET16, alkyl-hydroperoxide reductase DOT5, thioredoxin peroxidases TSA1 and TSA2, alkyl hydroperoxide reductase AHP1, and peroxiredoxin HYR1. Thioredoxin is also involved in protection against reducing stress. As part of the LMA1 complex, it is involved in the facilitation of vesicle fusion such as homotypic vacuole and ER-derived COPII vesicle fusion with the Golgi. This activity does not require the redox mechanism. The polypeptide is Thioredoxin-1 (TRX1) (Saccharomyces cerevisiae (strain ATCC 204508 / S288c) (Baker's yeast)).